Here is a 172-residue protein sequence, read N- to C-terminus: Scytalone dehydratase (172 aa).

Residues Y30, Y50, and F53 each coordinate substrate. Catalysis depends on residues H85 and H110. N131 contacts substrate.

It belongs to the scytalone dehydratase family. Homotrimer. Each subunit contains an active site, located in the central part of the hydrophobic core of the monomer, which functions independently.

The protein localises to the endosome. It catalyses the reaction scytalone = 1,3,8-trihydroxynaphthalene + H2O. It functions in the pathway pigment biosynthesis; melanin biosynthesis. (N-phenoxypropyl)-carboxamides such as carpropamid and derivatives of norephedrine act as inhibitors of scytalone dehydratase activity. Scytalone dehydratase; part of the gene cluster that mediates the biosynthesis of dihydroxynaphthalene melanin, a bluish-green pigment and a structural component of the conidial wall. Within the pathway, catalyzes the dehydration of scytalone as well as of vermelone. Is also able to dehydrate the alternate substrate 2,3-dihydro-2,5-dihydroxy-4H-benzopyran-4-one (DDBO) to 5-hydroxy-4H-1-benzopyran-4-one (HBO). This Pyricularia oryzae (strain 70-15 / ATCC MYA-4617 / FGSC 8958) (Rice blast fungus) protein is Scytalone dehydratase (SDH1).